Consider the following 131-residue polypeptide: Small ribosomal subunit protein uS8 (131 aa).

It belongs to the universal ribosomal protein uS8 family. In terms of assembly, part of the 30S ribosomal subunit. Contacts proteins S5 and S12.

One of the primary rRNA binding proteins, it binds directly to 16S rRNA central domain where it helps coordinate assembly of the platform of the 30S subunit. The chain is Small ribosomal subunit protein uS8 from Burkholderia multivorans (strain ATCC 17616 / 249).